An 87-amino-acid polypeptide reads, in one-letter code: U3-theraphotoxin-Hhn1m (87 aa).

The first 24 residues, 1–24 (MVNMKASMFLTFAGLVLLFVVCYA), serve as a signal peptide directing secretion. Residues 25-52 (SESEEKEFPKEMLSSIFAVDNDFKQEER) constitute a propeptide that is removed on maturation. Disulfide bonds link Cys-54–Cys-67, Cys-61–Cys-72, and Cys-66–Cys-79.

The protein belongs to the neurotoxin 10 (Hwtx-1) family. 51 (Hntx-8) subfamily. Hntx-8 sub-subfamily. In terms of tissue distribution, expressed by the venom gland.

The protein resides in the secreted. Its function is as follows. Ion channel inhibitor. The protein is U3-theraphotoxin-Hhn1m of Cyriopagopus hainanus (Chinese bird spider).